Consider the following 352-residue polypeptide: Photosystem II D2 protein (352 aa).

Residues 1–31 lie on the Cytoplasmic side of the membrane; it reads MTIAVGRAPVERGWFDVLDDWLKRDRFVFIG. The chain crosses the membrane as a helical span at residues 32–53; it reads WSGLLLFPCAFMALGGWLTGTT. Residues 54–108 are Lumenal, thylakoid-facing; the sequence is FVTSWYTHGLASSYLEGANFLTVAVSSPADAFGHSLLFLWGPEAQGNLTRWFQIG. Residues 109 to 131 form a helical membrane-spanning segment; that stretch reads GLWPFVALHGAFGLIGFMLRQFE. H117 provides a ligand contact to chlorophyll a. Residue Q129 participates in pheophytin a binding. At 132–140 the chain is on the cytoplasmic side; sequence ISRLVGIRP. Residues 141–162 form a helical membrane-spanning segment; the sequence is YNAIAFSGPIAVFVSVFLMYPL. N142 provides a ligand contact to pheophytin a. Over 163 to 190 the chain is Lumenal, thylakoid; sequence GQSSWFFAPSFGVAGIFRFILFLQGFHN. The chain crosses the membrane as a helical span at residues 191-217; it reads WTLNPFHMMGVAGILGGALLCAIHGAT. Position 197 (H197) interacts with chlorophyll a. H214 and F261 together coordinate a plastoquinone. Residue H214 participates in Fe cation binding. At 218 to 265 the chain is on the cytoplasmic side; the sequence is VENTLFEDGEDSNTFRAFEPTQAEETYSMVTANRFWSQIFGIAFSNKR. A helical membrane pass occupies residues 266-288; it reads WLHFFMLFVPVTGLWMSSVGIVG. H268 is a binding site for Fe cation. The Lumenal, thylakoid portion of the chain corresponds to 289 to 352; sequence LALNLRAYDF…EEVLPRGNAL (64 aa).

The protein belongs to the reaction center PufL/M/PsbA/D family. PSII is composed of 1 copy each of membrane proteins PsbA, PsbB, PsbC, PsbD, PsbE, PsbF, PsbH, PsbI, PsbJ, PsbK, PsbL, PsbM, PsbT, PsbX, PsbY, PsbZ, Psb30/Ycf12, peripheral proteins PsbO, CyanoQ (PsbQ), PsbU, PsbV and a large number of cofactors. It forms dimeric complexes. Requires The D1/D2 heterodimer binds P680, chlorophylls that are the primary electron donor of PSII, and subsequent electron acceptors. It shares a non-heme iron and each subunit binds pheophytin, quinone, additional chlorophylls, carotenoids and lipids. There is also a Cl(-1) ion associated with D1 and D2, which is required for oxygen evolution. The PSII complex binds additional chlorophylls, carotenoids and specific lipids. as cofactor.

It localises to the cellular thylakoid membrane. The enzyme catalyses 2 a plastoquinone + 4 hnu + 2 H2O = 2 a plastoquinol + O2. Photosystem II (PSII) is a light-driven water:plastoquinone oxidoreductase that uses light energy to abstract electrons from H(2)O, generating O(2) and a proton gradient subsequently used for ATP formation. It consists of a core antenna complex that captures photons, and an electron transfer chain that converts photonic excitation into a charge separation. The D1/D2 (PsbA/PsbD) reaction center heterodimer binds P680, the primary electron donor of PSII as well as several subsequent electron acceptors. D2 is needed for assembly of a stable PSII complex. This chain is Photosystem II D2 protein, found in Synechocystis sp. (strain ATCC 27184 / PCC 6803 / Kazusa).